We begin with the raw amino-acid sequence, 308 residues long: 2-methylisocitrate lyase (308 aa).

54-56 (SGG) contributes to the substrate binding site. 2 residues coordinate Mg(2+): Asp94 and Asp96. Substrate is bound by residues 131–132 (CG), Arg166, Glu196, 224–226 (NIT), Arg255, and Arg284.

Belongs to the isocitrate lyase/PEP mutase superfamily. Methylisocitrate lyase family. As to quaternary structure, homotetramer; dimer of dimers. The cofactor is Mg(2+).

The catalysed reaction is (2S,3R)-3-hydroxybutane-1,2,3-tricarboxylate = pyruvate + succinate. Its pathway is organic acid metabolism; propanoate degradation. Functionally, involved in the catabolism of short chain fatty acids (SCFA) via the 2-methylcitrate cycle I (propionate degradation route). Catalyzes the thermodynamically favored C-C bond cleavage reaction of (2R,3S)-2-methylisocitrate to yield pyruvate and succinate via an alpha-carboxy-carbanion intermediate. This chain is 2-methylisocitrate lyase, found in Vibrio cholerae serotype O1 (strain ATCC 39315 / El Tor Inaba N16961).